We begin with the raw amino-acid sequence, 274 residues long: SIMKMDGSQQEENLDVISTGSLGVDLALGVGGLPRGRVVEIFGPESSGKTTLCLEAIAQCQKNGGICAFIDAEHAFDPIYARKLGVKVEELYLSQPDTGEQALEICDTLVRSGGVDMVVVDSVAALVPKAEIEGEMGDSHVGLQARLMSQALRKLTGHIKRTNTLVVFINQIRMKIGVMFGSPETTTGGNALKFYASVRLDIRRTGQIKKGDDVIGNETKVKVIKNKVAPPFRQAEFDILYGEGVSWEGELIDLGVKYDIVEKSGAWYSYNGAK.

Residue 43-50 (GPESSGKT) coordinates ATP.

This sequence belongs to the RecA family.

The protein resides in the cytoplasm. Can catalyze the hydrolysis of ATP in the presence of single-stranded DNA, the ATP-dependent uptake of single-stranded DNA by duplex DNA, and the ATP-dependent hybridization of homologous single-stranded DNAs. It interacts with LexA causing its activation and leading to its autocatalytic cleavage. The polypeptide is Protein RecA (Neisseria mucosa).